Reading from the N-terminus, the 316-residue chain is Ribosomal RNA small subunit methyltransferase H (316 aa).

S-adenosyl-L-methionine-binding positions include G35 to H37, D55, Y79, D100, and Q107.

It belongs to the methyltransferase superfamily. RsmH family.

The protein localises to the cytoplasm. It carries out the reaction cytidine(1402) in 16S rRNA + S-adenosyl-L-methionine = N(4)-methylcytidine(1402) in 16S rRNA + S-adenosyl-L-homocysteine + H(+). Specifically methylates the N4 position of cytidine in position 1402 (C1402) of 16S rRNA. This Nitrosospira multiformis (strain ATCC 25196 / NCIMB 11849 / C 71) protein is Ribosomal RNA small subunit methyltransferase H.